A 116-amino-acid chain; its full sequence is Flagellar transcriptional regulator FlhD (116 aa).

It belongs to the FlhD family. As to quaternary structure, homodimer; disulfide-linked. Forms a heterohexamer composed of two FlhC and four FlhD subunits. Each FlhC binds a FlhD dimer, forming a heterotrimer, and a hexamer assembles by dimerization of two heterotrimers.

It is found in the cytoplasm. In terms of biological role, functions in complex with FlhC as a master transcriptional regulator that regulates transcription of several flagellar and non-flagellar operons by binding to their promoter region. Activates expression of class 2 flagellar genes, including fliA, which is a flagellum-specific sigma factor that turns on the class 3 genes. Also regulates genes whose products function in a variety of physiological pathways. The polypeptide is Flagellar transcriptional regulator FlhD (Proteus mirabilis (strain HI4320)).